We begin with the raw amino-acid sequence, 509 residues long: ATP synthase subunit beta (509 aa).

167 to 174 (GGAGVGKT) contributes to the ATP binding site. The disordered stretch occupies residues 476 to 509 (ESLGAKMEDTSGDGAPAQSDSKSDSKGDDADKDA). Residues 496 to 509 (SKSDSKGDDADKDA) are compositionally biased toward basic and acidic residues.

It belongs to the ATPase alpha/beta chains family. In terms of assembly, F-type ATPases have 2 components, CF(1) - the catalytic core - and CF(0) - the membrane proton channel. CF(1) has five subunits: alpha(3), beta(3), gamma(1), delta(1), epsilon(1). CF(0) has three main subunits: a(1), b(2) and c(9-12). The alpha and beta chains form an alternating ring which encloses part of the gamma chain. CF(1) is attached to CF(0) by a central stalk formed by the gamma and epsilon chains, while a peripheral stalk is formed by the delta and b chains.

It localises to the cell membrane. It carries out the reaction ATP + H2O + 4 H(+)(in) = ADP + phosphate + 5 H(+)(out). In terms of biological role, produces ATP from ADP in the presence of a proton gradient across the membrane. The catalytic sites are hosted primarily by the beta subunits. This chain is ATP synthase subunit beta, found in Mycobacterium sp. (strain KMS).